The following is a 368-amino-acid chain: Chaperone protein DnaJ (368 aa).

The region spanning 5 to 65 (DYYEVLGLTK…QKKARYDQFG (61 aa)) is the J domain. Residues 125-207 (GKETEIEIPK…CRGEGKVQKR (83 aa)) form a CR-type zinc finger. Residues C138, C141, C155, C158, C181, C184, C195, and C198 each coordinate Zn(2+). 4 CXXCXGXG motif repeats span residues 138–145 (CETCHGSG), 155–162 (CSTCNGAG), 181–188 (CTTCHGTG), and 195–202 (CSTCRGEG).

The protein belongs to the DnaJ family. In terms of assembly, homodimer. The cofactor is Zn(2+).

It localises to the cytoplasm. Its function is as follows. Participates actively in the response to hyperosmotic and heat shock by preventing the aggregation of stress-denatured proteins and by disaggregating proteins, also in an autonomous, DnaK-independent fashion. Unfolded proteins bind initially to DnaJ; upon interaction with the DnaJ-bound protein, DnaK hydrolyzes its bound ATP, resulting in the formation of a stable complex. GrpE releases ADP from DnaK; ATP binding to DnaK triggers the release of the substrate protein, thus completing the reaction cycle. Several rounds of ATP-dependent interactions between DnaJ, DnaK and GrpE are required for fully efficient folding. Also involved, together with DnaK and GrpE, in the DNA replication of plasmids through activation of initiation proteins. This is Chaperone protein DnaJ from Lysinibacillus sphaericus (Bacillus sphaericus).